A 674-amino-acid chain; its full sequence is ATP-dependent DNA helicase Hel308 (674 aa).

ATP is bound by residues Q27 and 44-51 (VPTAAGKT). The 167-residue stretch at 31–197 (IEQIRKGRNV…WLDASLIKSD (167 aa)) folds into the Helicase ATP-binding domain. Residues 142 to 145 (DEIH) carry the DEAH box motif. The 188-residue stretch at 224–411 (SINQIIRETV…EAKVRFNTLA (188 aa)) folds into the Helicase C-terminal domain.

Belongs to the helicase family. Hel308 subfamily. Monomer.

It catalyses the reaction Couples ATP hydrolysis with the unwinding of duplex DNA by translocating in the 3'-5' direction.. The enzyme catalyses ATP + H2O = ADP + phosphate + H(+). Its function is as follows. DNA-dependent ATPase and 3'-5' DNA helicase that may be involved in repair of stalled replication forks. In Thermoplasma acidophilum (strain ATCC 25905 / DSM 1728 / JCM 9062 / NBRC 15155 / AMRC-C165), this protein is ATP-dependent DNA helicase Hel308.